We begin with the raw amino-acid sequence, 254 residues long: Proline-rich protein 23A3 (254 aa).

3 disordered regions span residues 1–50 (MLRT…LEAP), 161–196 (ASPP…GAEQ), and 212–254 (PFPG…LVYE). Positions 35–50 (EPACPEPLAQPELEAP) are enriched in low complexity. Positions 214–241 (PGSPLQPLPPSPSRNPQEQLPPCPPCSP) are enriched in pro residues. The segment covering 243-254 (APRRARKRLVYE) has biased composition (basic residues).

It belongs to the PRR23 family.

The protein is Proline-rich protein 23A3 of Mus musculus (Mouse).